The chain runs to 151 residues: Potassium/proton antiporter CemA (151 aa).

Transmembrane regions (helical) follow at residues 7–27 and 107–127; these read LPSL…SSSF and ILHF…FFLG.

Belongs to the CemA family.

It localises to the plastid. The protein resides in the chloroplast inner membrane. It catalyses the reaction K(+)(in) + H(+)(out) = K(+)(out) + H(+)(in). In terms of biological role, contributes to K(+)/H(+) antiport activity by supporting proton efflux to control proton extrusion and homeostasis in chloroplasts in a light-dependent manner to modulate photosynthesis. Prevents excessive induction of non-photochemical quenching (NPQ) under continuous-light conditions. Indirectly promotes efficient inorganic carbon uptake into chloroplasts. The protein is Potassium/proton antiporter CemA of Aegilops crassa (Persian goatgrass).